Here is a 141-residue protein sequence, read N- to C-terminus: Hemoglobin subunit alpha (141 aa).

In terms of domain architecture, Globin spans 1-141 (VLSPADKTNV…VSTVLTSKYR (141 aa)). Position 3 is a phosphoserine (Ser-3). Lys-7 is modified (N6-succinyllysine). A Phosphothreonine modification is found at Thr-8. The residue at position 11 (Lys-11) is an N6-succinyllysine. Residue Lys-16 is modified to N6-acetyllysine; alternate. Lys-16 carries the N6-succinyllysine; alternate modification. Phosphotyrosine is present on Tyr-24. The residue at position 35 (Ser-35) is a Phosphoserine. Residue Lys-40 is modified to N6-succinyllysine. Ser-49 is modified (phosphoserine). His-58 contributes to the O2 binding site. Position 87 (His-87) interacts with heme b. Position 102 is a phosphoserine (Ser-102). Thr-108 carries the phosphothreonine modification. At Ser-124 the chain carries Phosphoserine. Thr-134 and Thr-137 each carry phosphothreonine. A Phosphoserine modification is found at Ser-138.

The protein belongs to the globin family. In terms of assembly, heterotetramer of two alpha chains and two beta chains. Red blood cells.

Involved in oxygen transport from the lung to the various peripheral tissues. In terms of biological role, hemopressin acts as an antagonist peptide of the cannabinoid receptor CNR1. Hemopressin-binding efficiently blocks cannabinoid receptor CNR1 and subsequent signaling. The sequence is that of Hemoglobin subunit alpha (HBA) from Martes foina (Beech marten).